The chain runs to 470 residues: Cell division protein FtsP (470 aa).

The segment at residues Met-1 to Ala-27 is a signal peptide (tat-type signal). In terms of domain architecture, Plastocyanin-like spans Trp-68–Glu-164.

Belongs to the FtsP family. Exported by the Tat system. The position of the signal peptide cleavage has been experimentally proven. Can also be exported by the Sec system.

The protein localises to the periplasm. Cell division protein that is required for growth during stress conditions. May be involved in protecting or stabilizing the divisomal assembly under conditions of stress. This Escherichia coli (strain K12) protein is Cell division protein FtsP.